Here is a 235-residue protein sequence, read N- to C-terminus: Ribonuclease 3 (235 aa).

The RNase III domain maps to 6 to 131; that stretch reads IDQLERLTEH…LIAVMYLDGG (126 aa). Glu-44 is a Mg(2+) binding site. Residue Asp-48 is part of the active site. Mg(2+) contacts are provided by Asp-117 and Glu-120. Glu-120 is an active-site residue. The region spanning 156–225 is the DRBM domain; the sequence is DAKTELQEWA…AEKVLRREGI (70 aa).

It belongs to the ribonuclease III family. In terms of assembly, homodimer. Mg(2+) is required as a cofactor.

The protein resides in the cytoplasm. It carries out the reaction Endonucleolytic cleavage to 5'-phosphomonoester.. Functionally, digests double-stranded RNA. Involved in the processing of primary rRNA transcript to yield the immediate precursors to the large and small rRNAs (23S and 16S). Processes some mRNAs, and tRNAs when they are encoded in the rRNA operon. Processes pre-crRNA and tracrRNA of type II CRISPR loci if present in the organism. The protein is Ribonuclease 3 of Bartonella quintana (strain Toulouse) (Rochalimaea quintana).